A 361-amino-acid chain; its full sequence is Holliday junction branch migration complex subunit RuvB (361 aa).

Polar residues-rich tracts occupy residues 1 to 15 (MAIKRSGNNNLSPNV) and 28 to 40 (ERSTSPELEQQEA). Residues 1 to 41 (MAIKRSGNNNLSPNVKSDLLSPEVIPQERSTSPELEQQEAS) form a disordered region. Residues 13–203 (PNVKSDLLSP…FGLIQRLRFY (191 aa)) form a large ATPase domain (RuvB-L) region. ATP is bound by residues L42, R43, G84, K87, T88, T89, 150–152 (EDF), R193, Y203, and R240. Residue T88 coordinates Mg(2+). Residues 204-274 (EVDELQQIIL…LASEALDLYQ (71 aa)) form a small ATPAse domain (RuvB-S) region. Residues 277-361 (KRGLDWTDRL…PTPLLPWKES (85 aa)) form a head domain (RuvB-H) region. R332 and R337 together coordinate DNA.

It belongs to the RuvB family. In terms of assembly, homohexamer. Forms an RuvA(8)-RuvB(12)-Holliday junction (HJ) complex. HJ DNA is sandwiched between 2 RuvA tetramers; dsDNA enters through RuvA and exits via RuvB. An RuvB hexamer assembles on each DNA strand where it exits the tetramer. Each RuvB hexamer is contacted by two RuvA subunits (via domain III) on 2 adjacent RuvB subunits; this complex drives branch migration. In the full resolvosome a probable DNA-RuvA(4)-RuvB(12)-RuvC(2) complex forms which resolves the HJ.

Its subcellular location is the cytoplasm. The catalysed reaction is ATP + H2O = ADP + phosphate + H(+). Functionally, the RuvA-RuvB-RuvC complex processes Holliday junction (HJ) DNA during genetic recombination and DNA repair, while the RuvA-RuvB complex plays an important role in the rescue of blocked DNA replication forks via replication fork reversal (RFR). RuvA specifically binds to HJ cruciform DNA, conferring on it an open structure. The RuvB hexamer acts as an ATP-dependent pump, pulling dsDNA into and through the RuvAB complex. RuvB forms 2 homohexamers on either side of HJ DNA bound by 1 or 2 RuvA tetramers; 4 subunits per hexamer contact DNA at a time. Coordinated motions by a converter formed by DNA-disengaged RuvB subunits stimulates ATP hydrolysis and nucleotide exchange. Immobilization of the converter enables RuvB to convert the ATP-contained energy into a lever motion, pulling 2 nucleotides of DNA out of the RuvA tetramer per ATP hydrolyzed, thus driving DNA branch migration. The RuvB motors rotate together with the DNA substrate, which together with the progressing nucleotide cycle form the mechanistic basis for DNA recombination by continuous HJ branch migration. Branch migration allows RuvC to scan DNA until it finds its consensus sequence, where it cleaves and resolves cruciform DNA. Its function is as follows. Participates in UV-tolerance of Synechocystis PCC 6803. The protein is Holliday junction branch migration complex subunit RuvB of Synechocystis sp. (strain ATCC 27184 / PCC 6803 / Kazusa).